Here is a 197-residue protein sequence, read N- to C-terminus: Small ribosomal subunit protein uS4c (197 aa).

One can recognise an S4 RNA-binding domain in the interval 85–157 (MRLDNILFRL…LQLFTGKELA (73 aa)).

The protein belongs to the universal ribosomal protein uS4 family. Part of the 30S ribosomal subunit. Contacts protein S5. The interaction surface between S4 and S5 is involved in control of translational fidelity.

It localises to the plastid. Functionally, one of the primary rRNA binding proteins, it binds directly to 16S rRNA where it nucleates assembly of the body of the 30S subunit. Its function is as follows. With S5 and S12 plays an important role in translational accuracy. This chain is Small ribosomal subunit protein uS4c (rps4), found in Cuscuta gronovii (Common dodder).